The chain runs to 1382 residues: Hepatocyte growth factor receptor (1382 aa).

Positions 1-24 are cleaved as a signal peptide; the sequence is MKAPAVLAPGILVLLFTLVQKSYG. The Extracellular segment spans residues 25-935; that stretch reads ECKEALVKSE…VQPDQNFTGL (911 aa). A Sema domain is found at 27–516; the sequence is KEALVKSEMN…TGKKITRIPL (490 aa). Asn-45 carries N-linked (GlcNAc...) asparagine glycosylation. Cystine bridges form between Cys-95–Cys-101, Cys-98–Cys-160, Cys-133–Cys-141, and Cys-173–Cys-176. Asn-106 is a glycosylation site (N-linked (GlcNAc...) asparagine). N-linked (GlcNAc...) asparagine glycans are attached at residues Asn-203 and Asn-359. 2 disulfides stabilise this stretch: Cys-299–Cys-364 and Cys-386–Cys-398. N-linked (GlcNAc...) asparagine glycans are attached at residues Asn-400 and Asn-406. 4 cysteine pairs are disulfide-bonded: Cys-521-Cys-539, Cys-527-Cys-562, Cys-530-Cys-546, and Cys-542-Cys-552. 3 IPT/TIG domains span residues 564 to 656, 658 to 740, and 743 to 837; these read PAIY…FSYV, PIIT…FSYQ, and PIVY…LIYV. The O-linked (Man) threonine glycan is linked to Thr-583. Residues Asn-608 and Asn-636 are each glycosylated (N-linked (GlcNAc...) asparagine). 2 O-linked (Man) threonine glycosylation sites follow: Thr-677 and Thr-762. Asn-786, Asn-880, and Asn-931 each carry an N-linked (GlcNAc...) asparagine glycan. A helical transmembrane segment spans residues 936-956; the sequence is IAGVISISTIVLLLLGLFLWL. Topologically, residues 957 to 1379 are cytoplasmic; that stretch reads KRKKQIKDLG…LSSQDNIDGE (423 aa). The residue at position 967 (Ser-967) is a Phosphoserine. Phosphothreonine is present on Thr-978. A phosphoserine mark is found at Ser-991, Ser-998, and Ser-1001. The residue at position 1004 (Tyr-1004) is a Phosphotyrosine. A Protein kinase domain is found at 1079–1346; it reads VHFNEVIGRG…RISAIFSTFI (268 aa). ATP is bound by residues 1085–1093 and Lys-1111; that span reads IGRGHFGCV. The active-site Proton acceptor is the Asp-1205. The interval 1213–1382 is interaction with RANBP9; it reads LDEKFTVKVA…QDNIDGEGDT (170 aa). Residue Tyr-1231 is modified to Phosphotyrosine. Phosphotyrosine; by autocatalysis occurs at positions 1235 and 1236. Thr-1290 bears the Phosphothreonine mark. Residues 1321-1360 form an interaction with MUC20 region; sequence WHPRAELRPSFSELVSRISAIFSTFIGEHYVHVNATYVNV. 2 positions are modified to phosphotyrosine; by autocatalysis: Tyr-1350 and Tyr-1357. Residue Tyr-1366 is modified to Phosphotyrosine.

It belongs to the protein kinase superfamily. Tyr protein kinase family. Heterodimer made of an alpha chain (50 kDa) and a beta chain (145 kDa) which are disulfide linked. Binds PLXNB1. Interacts when phosphorylated with downstream effectors including STAT3, PIK3R1, SRC, PCLG1, GRB2 and GAB1. Interacts with SPSB1, SPSB2 and SPSB4. Interacts with INPP5D/SHIP1. When phosphorylated at Tyr-1357, interacts with INPPL1/SHIP2. Interacts with RANBP9 and RANBP10, as well as SPSB1, SPSB2, SPSB3 and SPSB4. SPSB1 binding occurs in the presence and in the absence of HGF, however HGF treatment has a positive effect on this interaction. Interacts with MUC20; prevents interaction with GRB2 and suppresses hepatocyte growth factor-induced cell proliferation. Interacts with GRB10. Interacts with PTPN1 and PTPN2. Interacts with HSP90AA1 and HSP90AB1; the interaction suppresses MET kinase activity. Interacts with tensin TNS3. Interacts (when phosphorylated) with tensin TNS4 (via SH2 domain); the interaction increases MET protein stability by inhibiting MET endocytosis and subsequent lysosomal degradation. In terms of assembly, (Microbial infection) Interacts with L.monocytogenes InlB. InlB probably dimerizes upon binding to MET, which encourages subsequent dimerization of MET. Post-translationally, autophosphorylated in response to ligand binding on Tyr-1235 and Tyr-1236 in the kinase domain leading to further phosphorylation of Tyr-1350 and Tyr-1357 in the C-terminal multifunctional docking site. Dephosphorylated by PTPRJ at Tyr-1350 and Tyr-1366. Dephosphorylated by PTPN1 and PTPN2. Ubiquitinated. Ubiquitination by CBL regulates the receptor stability and activity through proteasomal degradation. In terms of processing, (Microbial infection) Tyrosine phosphorylation is stimulated by L.monocytogenes InlB. Post-translationally, O-mannosylation of IPT/TIG domains by TMEM260 is required for protein maturation. O-mannosylated residues are composed of single mannose glycans that are not elongated or modified.

It is found in the membrane. It catalyses the reaction L-tyrosyl-[protein] + ATP = O-phospho-L-tyrosyl-[protein] + ADP + H(+). Its activity is regulated as follows. In its inactive state, the C-terminal tail interacts with the catalytic domain and inhibits the kinase activity. Upon ligand binding, the C-terminal tail is displaced and becomes phosphorylated, thus increasing the kinase activity. Its function is as follows. Receptor tyrosine kinase that transduces signals from the extracellular matrix into the cytoplasm by binding to hepatocyte growth factor/HGF ligand. Regulates many physiological processes including proliferation, scattering, morphogenesis and survival. Ligand binding at the cell surface induces autophosphorylation of MET on its intracellular domain that provides docking sites for downstream signaling molecules. Following activation by ligand, interacts with the PI3-kinase subunit PIK3R1, PLCG1, SRC, GRB2, STAT3 or the adapter GAB1. Recruitment of these downstream effectors by MET leads to the activation of several signaling cascades including the RAS-ERK, PI3 kinase-AKT, or PLCgamma-PKC. The RAS-ERK activation is associated with the morphogenetic effects while PI3K/AKT coordinates prosurvival effects. During embryonic development, MET signaling plays a role in gastrulation, development and migration of muscles and neuronal precursors, angiogenesis and kidney formation. In adults, participates in wound healing as well as organ regeneration and tissue remodeling. Also promotes differentiation and proliferation of hematopoietic cells. In terms of biological role, (Microbial infection) Acts as a receptor for Listeria monocytogenes internalin InlB, mediating entry of the pathogen into cells. This is Hepatocyte growth factor receptor (MET) from Canis lupus familiaris (Dog).